Consider the following 485-residue polypeptide: Glutamate--tRNA ligase (485 aa).

Residues P11–N21 carry the 'HIGH' region motif. The 'KMSKS' region signature appears at K252–R256. K255 serves as a coordination point for ATP.

It belongs to the class-I aminoacyl-tRNA synthetase family. Glutamate--tRNA ligase type 1 subfamily. As to quaternary structure, monomer.

It is found in the cytoplasm. The enzyme catalyses tRNA(Glu) + L-glutamate + ATP = L-glutamyl-tRNA(Glu) + AMP + diphosphate. In terms of biological role, catalyzes the attachment of glutamate to tRNA(Glu) in a two-step reaction: glutamate is first activated by ATP to form Glu-AMP and then transferred to the acceptor end of tRNA(Glu). The protein is Glutamate--tRNA ligase of Bacillus thuringiensis (strain Al Hakam).